The following is a 473-amino-acid chain: ATP synthase subunit beta (473 aa).

158–165 (GGAGVGKT) is an ATP binding site.

Belongs to the ATPase alpha/beta chains family. As to quaternary structure, F-type ATPases have 2 components, CF(1) - the catalytic core - and CF(0) - the membrane proton channel. CF(1) has five subunits: alpha(3), beta(3), gamma(1), delta(1), epsilon(1). CF(0) has three main subunits: a(1), b(2) and c(9-12). The alpha and beta chains form an alternating ring which encloses part of the gamma chain. CF(1) is attached to CF(0) by a central stalk formed by the gamma and epsilon chains, while a peripheral stalk is formed by the delta and b chains.

It localises to the cell membrane. It catalyses the reaction ATP + H2O + 4 H(+)(in) = ADP + phosphate + 5 H(+)(out). In terms of biological role, produces ATP from ADP in the presence of a proton gradient across the membrane. The catalytic sites are hosted primarily by the beta subunits. This Priestia megaterium (strain ATCC 12872 / QMB1551) (Bacillus megaterium) protein is ATP synthase subunit beta.